The primary structure comprises 160 residues: Growth arrest and DNA damage-inducible protein GADD45 beta (160 aa).

It belongs to the GADD45 family. Interacts with GADD45GIP1.

Involved in the regulation of growth and apoptosis. Mediates activation of stress-responsive MTK1/MEKK4 MAPKKK. This chain is Growth arrest and DNA damage-inducible protein GADD45 beta (GADD45B), found in Bos taurus (Bovine).